Reading from the N-terminus, the 129-residue chain is UPF0344 protein USA300HOU_0928 (129 aa).

A run of 4 helical transmembrane segments spans residues 1–21, 36–56, 67–87, and 99–119; these read MLHL…ATYL, LHMI…WILI, MLLT…EVSI, and MFWI…ILPL.

It belongs to the UPF0344 family.

It is found in the cell membrane. The chain is UPF0344 protein USA300HOU_0928 from Staphylococcus aureus (strain USA300 / TCH1516).